The primary structure comprises 226 residues: Gap junction beta-2 protein (226 aa).

The stretch at 2–13 (DWGALQTILGGV) is an intramembrane region. Residues 14 to 20 (NKHSTSI) lie on the Cytoplasmic side of the membrane. The chain crosses the membrane as a helical span at residues 21–40 (GKIWLTVLFIFRIMILVVAA). The Extracellular segment spans residues 41–73 (KEVWGDEQADFVCNTLQPGCKNVCYDHYFPISH). Residues E42, G45, and E47 each coordinate Ca(2+). Intrachain disulfides connect C53–C180, C60–C174, and C64–C169. Residues 74 to 94 (IRLWALQLIFVSTPALLVAMH) traverse the membrane as a helical segment. Residues 95–135 (VAYRRHEKKRKFIKGEIKSEFKDIEEIKTQKVRIEGSLWWT) lie on the Cytoplasmic side of the membrane. The chain crosses the membrane as a helical span at residues 136–156 (YTSSIFFRVIFEAAFMYVFYV). Topologically, residues 157 to 189 (MYDGFSMQRLVKCNAWPCPNTVDCFVSRPTEKT) are extracellular. The helical transmembrane segment at 190-210 (VFTVFMIAVSGICILLNVTEL) threads the bilayer. Topologically, residues 211 to 226 (CYLLIRYCSGRSKKPV) are cytoplasmic.

Belongs to the connexin family. Beta-type (group I) subfamily. As to quaternary structure, a hemichannel or connexon is composed of a hexamer of connexins. A functional gap junction is formed by the apposition of two hemichannels. Forms heteromeric channels with GJB4. Interacts with CNST.

Its subcellular location is the cell membrane. It localises to the cell junction. The protein localises to the gap junction. Its function is as follows. Structural component of gap junctions. Gap junctions are dodecameric channels that connect the cytoplasm of adjoining cells. They are formed by the docking of two hexameric hemichannels, one from each cell membrane. Small molecules and ions diffuse from one cell to a neighboring cell via the central pore. This is Gap junction beta-2 protein (GJB2) from Pongo pygmaeus (Bornean orangutan).